The primary structure comprises 202 residues: Adenylyl-sulfate kinase (202 aa).

31 to 38 (GLSASGKS) contributes to the ATP binding site. The active-site Phosphoserine intermediate is serine 105.

It belongs to the APS kinase family.

It catalyses the reaction adenosine 5'-phosphosulfate + ATP = 3'-phosphoadenylyl sulfate + ADP + H(+). It functions in the pathway sulfur metabolism; hydrogen sulfide biosynthesis; sulfite from sulfate: step 2/3. In terms of biological role, catalyzes the synthesis of activated sulfate. In Saccharomyces bayanus (Yeast), this protein is Adenylyl-sulfate kinase (MET14).